Consider the following 292-residue polypeptide: 4-diphosphocytidyl-2-C-methyl-D-erythritol kinase (292 aa).

Lys-13 is an active-site residue. 97-107 provides a ligand contact to ATP; it reads PVAAGLAGGSS. Asp-139 is a catalytic residue.

It belongs to the GHMP kinase family. IspE subfamily.

The enzyme catalyses 4-CDP-2-C-methyl-D-erythritol + ATP = 4-CDP-2-C-methyl-D-erythritol 2-phosphate + ADP + H(+). The protein operates within isoprenoid biosynthesis; isopentenyl diphosphate biosynthesis via DXP pathway; isopentenyl diphosphate from 1-deoxy-D-xylulose 5-phosphate: step 3/6. Catalyzes the phosphorylation of the position 2 hydroxy group of 4-diphosphocytidyl-2C-methyl-D-erythritol. The chain is 4-diphosphocytidyl-2-C-methyl-D-erythritol kinase from Bacillus thuringiensis (strain Al Hakam).